The following is a 472-amino-acid chain: Methanethiol oxidase (472 aa).

Ala-2 is modified (N-acetylalanine). 3 positions are modified to phosphoserine: Ser-111, Ser-371, and Ser-467.

It belongs to the selenium-binding protein family. Interacts with USP33. In terms of processing, phosphorylated. Post-translationally, the N-terminus is blocked. Widely expressed. Highly expressed in liver, lung, colon, prostate, kidney and pancreas. In brain, present both in neurons and glia (at protein level). Down-regulated in lung adenocarcinoma, colorectal carcinoma and ovarian cancer. Two-fold up-regulated in brain and blood from schizophrenia patients.

The protein localises to the nucleus. Its subcellular location is the cytoplasm. It localises to the cytosol. The protein resides in the membrane. The catalysed reaction is methanethiol + O2 + H2O = hydrogen sulfide + formaldehyde + H2O2 + H(+). The protein operates within organosulfur degradation. Functionally, catalyzes the oxidation of methanethiol, an organosulfur compound known to be produced in substantial amounts by gut bacteria. Selenium-binding protein which may be involved in the sensing of reactive xenobiotics in the cytoplasm. May be involved in intra-Golgi protein transport. The polypeptide is Methanethiol oxidase (SELENBP1) (Homo sapiens (Human)).